The sequence spans 319 residues: Transcription factor bHLH111 (319 aa).

Positions 1 to 23 (MDHHHHIASRNSSTTSELPSFEP) are disordered. Over residues 9 to 18 (SRNSSTTSEL) the composition is skewed to polar residues. In terms of domain architecture, bHLH spans 195-244 (SEGSTLSPEKELPKAKLRDKITTLQQIVSPFGKTDTASVLQEAITYINFY).

As to quaternary structure, homodimer.

Its subcellular location is the nucleus. The chain is Transcription factor bHLH111 (BHLH111) from Arabidopsis thaliana (Mouse-ear cress).